The sequence spans 835 residues: Involucrin (835 aa).

Residues 1–15 are compositionally biased toward polar residues; the sequence is MSQQHTLPVTLSPAL. 8 disordered regions span residues 1-133, 150-206, 221-285, 321-342, 381-428, 446-486, 501-548, and 566-809; these read MSQQ…LDQR, EQLL…LEVP, GQLK…QLKH, GQLK…QEGQ, GQLK…VPEE, LDQQ…LEVP, and LDQQ…QPAL. Over residues 76 to 91 the composition is skewed to low complexity; it reads EQQQQEPQEQELQQQH. Composition is skewed to basic and acidic residues over residues 92-115 and 159-168; these read WEQH…KAQR and QEQHLKHLEQ. The span at 169-181 shows a compositional bias: low complexity; the sequence is QEGQLELPEQQEG. Basic and acidic residues-rich tracts occupy residues 182-198 and 222-268; these read QLKH…HLEQ and QLKH…HLDQ. Low complexity-rich tracts occupy residues 269–281, 329–341, and 389–401; these read QEGQ…QQEG. 2 stretches are compositionally biased toward basic and acidic residues: residues 402–421 and 446–464; these read QLKH…HQEG and LDQQ…KQLE. A compositionally biased stretch (low complexity) spans 509–521; the sequence is QEGQLELPEQQEG. Composition is skewed to basic and acidic residues over residues 522 to 541, 566 to 584, and 594 to 620; these read QLKH…HQEG, LDQQ…KQLE, and KHLE…EHQE. Residues 655-668 are compositionally biased toward low complexity; sequence HLVQQEGQLEQQEG. Positions 669–685 are enriched in basic and acidic residues; it reads QVEHLEEQVGQLKHLEE. The segment covering 693–710 has biased composition (low complexity); the sequence is LEQQQGQLEVPEQQVGQP. Composition is skewed to basic and acidic residues over residues 711–721, 729–738, and 751–775; these read KHLEQEEKQLE, QLKHLEKQEA, and KHLE…HLEQ. Over residues 776–789 the composition is skewed to polar residues; sequence QEGQLKNLEQQKGQ.

It belongs to the involucrin family. Directly or indirectly cross-linked to cornifelin (CNFN). Substrate of transglutaminase. Specific glutamines or lysines are cross-linked to keratins, desmoplakin and to inter involucrin molecules. In terms of tissue distribution, keratinocytes of epidermis and other stratified squamous epithelia.

The protein resides in the cytoplasm. In terms of biological role, part of the insoluble cornified cell envelope (CE) of stratified squamous epithelia. This chain is Involucrin (IVL), found in Pongo pygmaeus (Bornean orangutan).